Here is a 498-residue protein sequence, read N- to C-terminus: Putative BTB/POZ domain-containing protein L67 (498 aa).

A BTB domain is found at 26 to 96 (SDINITLSDN…MYGISLSEIN (71 aa)).

The protein belongs to the mimivirus BTB/WD family.

In Acanthamoeba polyphaga (Amoeba), this protein is Putative BTB/POZ domain-containing protein L67.